Here is a 514-residue protein sequence, read N- to C-terminus: Peptide chain release factor 3 (514 aa).

One can recognise a tr-type G domain in the interval 8-268; that stretch reads KKRRTFAIIS…TFLEFAPEPH (261 aa). Residues 17–24, 85–89, and 139–142 each bind GTP; these read SHPDAGKT, DTPGH, and NKLD.

This sequence belongs to the TRAFAC class translation factor GTPase superfamily. Classic translation factor GTPase family. PrfC subfamily.

It localises to the cytoplasm. In terms of biological role, increases the formation of ribosomal termination complexes and stimulates activities of RF-1 and RF-2. It binds guanine nucleotides and has strong preference for UGA stop codons. It may interact directly with the ribosome. The stimulation of RF-1 and RF-2 is significantly reduced by GTP and GDP, but not by GMP. This is Peptide chain release factor 3 from Streptococcus pyogenes serotype M5 (strain Manfredo).